Reading from the N-terminus, the 263-residue chain is Diphthine synthase (263 aa).

S-adenosyl-L-methionine contacts are provided by residues leucine 9, aspartate 84, methionine 87, 112 to 113, leucine 164, alanine 207, and histidine 232; that span reads SI.

It belongs to the diphthine synthase family. In terms of assembly, homodimer.

The catalysed reaction is 2-[(3S)-amino-3-carboxypropyl]-L-histidyl-[translation elongation factor 2] + 3 S-adenosyl-L-methionine = diphthine-[translation elongation factor 2] + 3 S-adenosyl-L-homocysteine + 3 H(+). It participates in protein modification; peptidyl-diphthamide biosynthesis. In terms of biological role, S-adenosyl-L-methionine-dependent methyltransferase that catalyzes the trimethylation of the amino group of the modified target histidine residue in translation elongation factor 2 (EF-2), to form an intermediate called diphthine. The three successive methylation reactions represent the second step of diphthamide biosynthesis. This chain is Diphthine synthase, found in Methanosphaera stadtmanae (strain ATCC 43021 / DSM 3091 / JCM 11832 / MCB-3).